We begin with the raw amino-acid sequence, 183 residues long: Small ribosomal subunit protein uS4c (183 aa).

An S4 RNA-binding domain is found at 82–143; it reads MRLDNILFRL…KQRSKALIQN (62 aa).

It belongs to the universal ribosomal protein uS4 family. In terms of assembly, part of the 30S ribosomal subunit. Contacts protein S5. The interaction surface between S4 and S5 is involved in control of translational fidelity.

It is found in the plastid. The protein resides in the chloroplast. Its function is as follows. One of the primary rRNA binding proteins, it binds directly to 16S rRNA where it nucleates assembly of the body of the 30S subunit. Functionally, with S5 and S12 plays an important role in translational accuracy. This is Small ribosomal subunit protein uS4c (rps4) from Schizorhiza neglecta (Lapeirousia neglecta).